Consider the following 202-residue polypeptide: MEIILLERVAKLGQMGEVVKVKDGFARNFLLRRGKALRATAENRAKYDGMKAELEANNIKAKGEAATVAEKINGRDIVVIRQASETGQLFGSVTVRDIVAALAADGIIVSRPQVWLDAPIKTIGQQKLTVAVHPEVEAEITVTVARSVDEAERIQRGEDISTRREDRDAAAEAIAAAGEFFDPDAQHDDEPAAEDDQNAEEK.

The segment at 176–202 (AAGEFFDPDAQHDDEPAAEDDQNAEEK) is disordered. Acidic residues predominate over residues 191–202 (PAAEDDQNAEEK).

The protein belongs to the bacterial ribosomal protein bL9 family.

In terms of biological role, binds to the 23S rRNA. The sequence is that of Large ribosomal subunit protein bL9 from Nitrobacter winogradskyi (strain ATCC 25391 / DSM 10237 / CIP 104748 / NCIMB 11846 / Nb-255).